A 662-amino-acid polypeptide reads, in one-letter code: Polyunsaturated fatty acid lipoxygenase ALOX15 (662 aa).

The PLAT domain occupies Gly-2–Arg-114. The 548-residue stretch at Thr-115–Ile-662 folds into the Lipoxygenase domain. Residues His-360, His-365, His-540, His-544, and Ile-662 each contribute to the Fe cation site.

It belongs to the lipoxygenase family. Interacts with PEBP1; in response to IL13/interleukin-13, prevents the interaction of PEBP1 with RAF1 to activate the ERK signaling cascade. Fe cation serves as cofactor.

The protein localises to the cytoplasm. It is found in the cytosol. Its subcellular location is the cell membrane. The protein resides in the lipid droplet. It catalyses the reaction (5Z,8Z,11Z,14Z)-eicosatetraenoate + O2 = (12S)-hydroperoxy-(5Z,8Z,10E,14Z)-eicosatetraenoate. It carries out the reaction (9Z,12Z)-octadecadienoate + O2 = (13S)-hydroperoxy-(9Z,11E)-octadecadienoate. The catalysed reaction is (5Z,8Z,11Z,14Z)-eicosatetraenoate + O2 = (15S)-hydroperoxy-(5Z,8Z,11Z,13E)-eicosatetraenoate. The enzyme catalyses (5Z,8Z,11Z,14Z)-eicosatetraenoate + 2 O2 = (14R,15S)-dihydroperoxy-(5Z,8Z,10E,12E)-eicosatetraenoate. It catalyses the reaction (5Z,8Z,11Z,14Z)-eicosatetraenoate + 2 O2 = (8S,15S)-dihydroperoxy-(5Z,9E,11Z,13E)-eicosatetraenoate. It carries out the reaction (14S,15R)-epoxy-(5Z,8Z,11Z)-eicosatrienoate + O2 = (8S)-hydroperoxy-(14S,15R)-epoxy-(5Z,9E,11Z)-eicosatrienoate. The catalysed reaction is (14S,15R)-epoxy-(5Z,8Z,11Z)-eicosatrienoate + O2 = (12S)-hydroperoxy-(14S,15R)-epoxy-(5Z,8Z,10E)-eicosatrienoate. The enzyme catalyses (14R,15S)-epoxy-(5Z,8Z,11Z)-eicosatrienoate + O2 = (5S)-hydroperoxy-(14R,15S)-epoxy-(6E,8Z,11Z)-eicosatrienoate. It catalyses the reaction (14R,15S)-epoxy-(5Z,8Z,11Z)-eicosatrienoate + O2 = (12S)-hydroperoxy-(14R,15S)-epoxy-(5Z,8Z,10E)-eicosatrienoate. It carries out the reaction (15R)-hydroperoxy-(5Z,8Z,11Z,13E)-eicosatetraenoate = 15-oxo-(5Z,8Z,11Z,13E)-eicosatetraenoate + H2O. The catalysed reaction is (15S)-hydroperoxy-(5Z,8Z,11Z,13E)-eicosatetraenoate = (14S,15S)-epoxy-(5Z,8Z,10E,12E)-eicosatetraenoate + H2O. The enzyme catalyses (12S)-hydroperoxy-(5Z,8Z,10E,14Z)-eicosatetraenoate = (8S)-hydroxy-(11S,12S)-epoxy-(5Z,9E,14Z)-eicosatrienoate. It catalyses the reaction (4Z,7Z,10Z,13Z,16Z)-docosapentaenoate + O2 = 14-hydroperoxy-(4Z,7Z,10Z,12E,16Z)-docosapentaenoate. It carries out the reaction (7Z,10Z,13Z,16Z,19Z)-docosapentaenoate + O2 = 14-hydroperoxy-(7Z,10Z,12E,16Z,19Z)-docosapentaenoate. The catalysed reaction is (4Z,7Z,10Z,13Z,16Z,19Z)-docosahexaenoate + O2 = (14S)-hydroperoxy-(4Z,7Z,10Z,12E,16Z,19Z)-docosahexaenoate. The enzyme catalyses (4Z,7Z,10Z,13Z,16Z,19Z)-docosahexaenoate + O2 = (17S)-hydroperoxy-(4Z,7Z,10Z,13Z,15E,19Z)-docosahexaenoate. It catalyses the reaction (7S)-hydroperoxy-(4Z,8E,10Z,13Z,16Z,19Z)-docosahexaenoate + O2 = (7S,14S)-dihydroperoxy-(4Z,8E,10Z,12E,16Z,19Z)-docosahexaenoate. It carries out the reaction (7S)-hydroperoxy-(4Z,8E,10Z,13Z,16Z,19Z)-docosahexaenoate + O2 = (7S,17S)-dihydroperoxy-(4Z,8E,10Z,13Z,15E,19Z)-docosahexaenoate. The catalysed reaction is (4Z,7Z,10Z,13Z,16Z,19Z)-docosahexaenoate + O2 = (11S)-hydroperoxy-(4Z,7Z,9E,13Z,16Z,19Z)-docosahexaenoate. The enzyme catalyses N-(5Z,8Z,11Z,14Z)-eicosatetraenoyl-taurine + O2 = N-(12S)-hydroperoxy-(5Z,8Z,10E,14Z)-eicosatetraenoyl-taurine. It catalyses the reaction N-(5Z,8Z,11Z,14Z)-eicosatetraenoyl-gamma-aminobutanoate + O2 = N-(12S)-hydroperoxy-(5Z,8Z,10E,14Z)-eicosatetraenoyl-gamma-aminobutanoate. It carries out the reaction N-(5Z,8Z,11Z,14Z)-eicosatetraenoyl-glycine + O2 = N-(12S)-hydroperoxy-(5Z,8Z,10E,14Z)-eicosatetraenoyl-glycine. The catalysed reaction is N-(5Z,8Z,11Z,14Z)-eicosatetraenoyl-L-alanine + O2 = N-(12S)-hydroperoxy-(5Z,8Z,10E,14Z)-eicosatetraenoyl-alanine. The enzyme catalyses N-(5Z,8Z,11Z,14Z)-eicosatetraenoyl-taurine + O2 = N-(15S)-hydroperoxy-(5Z,8Z,11Z,13E)-eicosatetraenoyl-taurine. It catalyses the reaction N-(5Z,8Z,11Z,14Z)-eicosatetraenoyl-gamma-aminobutanoate + O2 = N-(15S)-hydroperoxy-(5Z,8Z,11Z,13E)-eicosatetraenoyl-gamma-aminobutanoate. It carries out the reaction N-(5Z,8Z,11Z,14Z)-eicosatetraenoyl-glycine + O2 = N-(15S)-hydroperoxy-(5Z,8Z,11Z,13E)-eicosatetraenoyl-glycine. The catalysed reaction is N-(5Z,8Z,11Z,14Z)-eicosatetraenoyl-L-alanine + O2 = N-(15S)-hydroperoxy-(5Z,8Z,11Z,13E)-eicosatetraenoyl-alanine. The protein operates within lipid metabolism; hydroperoxy eicosatetraenoic acid biosynthesis. In terms of biological role, non-heme iron-containing dioxygenase that catalyzes the stereo-specific peroxidation of free and esterified polyunsaturated fatty acids generating a spectrum of bioactive lipid mediators. It inserts peroxyl groups at C12 or C15 of arachidonate ((5Z,8Z,11Z,14Z)-eicosatetraenoate) producing both 12-hydroperoxyeicosatetraenoate/12-HPETE and 15-hydroperoxyeicosatetraenoate/15-HPETE. It may then act on 12-HPETE to produce hepoxilins, which may show pro-inflammatory properties. Can also peroxidize linoleate ((9Z,12Z)-octadecadienoate) to 13-hydroperoxyoctadecadienoate. May participate in the sequential oxidations of DHA ((4Z,7Z,10Z,13Z,16Z,19Z)-docosahexaenoate) to generate specialized pro-resolving mediators (SPMs)like resolvin D5 ((7S,17S)-diHPDHA) and (7S,14S)-diHPDHA, that actively down-regulate the immune response and have anti-aggregation properties with platelets. Can convert epoxy fatty acids to hydroperoxy-epoxides derivatives followed by an intramolecular nucleophilic substitution leading to the formation of monocyclic endoperoxides. Plays an important role during the maintenance of self-tolerance by peroxidizing membrane-bound phosphatidylethanolamine which can then signal the sorting process for clearance of apoptotic cells during inflammation and prevent an autoimmune response. In addition to its role in the immune and inflammatory responses, this enzyme may play a role in epithelial wound healing in the cornea through production of lipoxin A4 (LXA(4)) and docosahexaenoic acid-derived neuroprotectin D1 (NPD1; 10R,17S-HDHA), both lipid autacoids exhibit anti-inflammatory and neuroprotective properties. Furthermore, it may regulate actin polymerization which is crucial for several biological processes such as the phagocytosis of apoptotic cells. It is also implicated in the generation of endogenous ligands for peroxisome proliferator activated receptor (PPAR-gamma), hence modulating macrophage development and function. It may also exert a negative effect on skeletal development by regulating bone mass through this pathway. As well as participates in ER stress and downstream inflammation in adipocytes, pancreatic islets, and liver. Finally, it is also involved in the cellular response to IL13/interleukin-13. This Pongo abelii (Sumatran orangutan) protein is Polyunsaturated fatty acid lipoxygenase ALOX15.